Reading from the N-terminus, the 83-residue chain is uncharacterized protein (83 aa).

The next 3 membrane-spanning stretches (helical) occupy residues 5 to 22, 32 to 49, and 56 to 78; these read VLLS…VYSI, IIKI…FSPA, and IGTI…IFIA.

It localises to the cell membrane. This is an uncharacterized protein from Rickettsia prowazekii (strain Madrid E).